A 247-amino-acid chain; its full sequence is Carboxy-S-adenosyl-L-methionine synthase (247 aa).

S-adenosyl-L-methionine contacts are provided by residues Y39, 64–66, 89–90, 117–118, N132, and R199; these read GCS, DN, and DI.

It belongs to the class I-like SAM-binding methyltransferase superfamily. Cx-SAM synthase family. As to quaternary structure, homodimer.

It catalyses the reaction prephenate + S-adenosyl-L-methionine = carboxy-S-adenosyl-L-methionine + 3-phenylpyruvate + H2O. Catalyzes the conversion of S-adenosyl-L-methionine (SAM) to carboxy-S-adenosyl-L-methionine (Cx-SAM). This chain is Carboxy-S-adenosyl-L-methionine synthase, found in Cronobacter sakazakii (strain ATCC BAA-894) (Enterobacter sakazakii).